The following is a 464-amino-acid chain: Interstitial collagenase A (464 aa).

Positions 1–17 are cleaved as a signal peptide; sequence MPSLPLLLLLWAASSYS. Positions 18 to 96 are cleaved as a propeptide — activation peptide; that stretch reads FPVFHNGDRQ…PRCGVPDVAP (79 aa). The short motif at 87–94 is the Cysteine switch element; that stretch reads PRCGVPDV. C89 serves as a coordination point for Zn(2+). The tract at residues 95–274 is metalloprotease; the sequence is APYAITHNNP…IQPTGATTPH (180 aa). D155 lines the Ca(2+) pocket. Positions 165 and 167 each coordinate Zn(2+). 2 residues coordinate Ca(2+): D172 and G173. H180 contributes to the Zn(2+) binding site. G187, G189, and D191 together coordinate Ca(2+). Zn(2+) is bound at residue H193. Residues D195 and E198 each contribute to the Ca(2+) site. The N-linked (GlcNAc...) asparagine glycan is linked to N202. H215 is a binding site for Zn(2+). E216 is an active-site residue. Zn(2+)-binding residues include H219 and H225. 2 Hemopexin repeats span residues 273–322 and 323–369; these read PHPC…WPNL and PVKL…FGFP. A disulfide bond links C276 and C464. D283 provides a ligand contact to Ca(2+). A glycan (N-linked (GlcNAc...) asparagine) is linked at N371. Hemopexin repeat units follow at residues 372–420 and 421–464; these read VTHI…FPGI and DDKV…WFNC. Residues D376 and D425 each contribute to the Ca(2+) site.

The protein belongs to the peptidase M10A family. It depends on Ca(2+) as a cofactor. Zn(2+) is required as a cofactor.

The protein resides in the secreted. The protein localises to the extracellular space. It is found in the extracellular matrix. The enzyme catalyses Cleavage of the triple helix of collagen at about three-quarters of the length of the molecule from the N-terminus, at 775-Gly-|-Ile-776 in the alpha1(I) chain. Cleaves synthetic substrates and alpha-macroglobulins at bonds where P1' is a hydrophobic residue.. Its activity is regulated as follows. Can be activated without removal of the activation peptide. Functionally, cleaves collagens of types I, II, and III at one site in the helical domain. Also cleaves collagens of types VII and X. Able to degrade synthetic peptides and type I and II fibrillar collagen. The protein is Interstitial collagenase A (Mmp1a) of Mus musculus (Mouse).